We begin with the raw amino-acid sequence, 284 residues long: 2-dehydro-3-deoxyphosphooctonate aldolase (284 aa).

It belongs to the KdsA family.

It is found in the cytoplasm. The enzyme catalyses D-arabinose 5-phosphate + phosphoenolpyruvate + H2O = 3-deoxy-alpha-D-manno-2-octulosonate-8-phosphate + phosphate. The protein operates within carbohydrate biosynthesis; 3-deoxy-D-manno-octulosonate biosynthesis; 3-deoxy-D-manno-octulosonate from D-ribulose 5-phosphate: step 2/3. It participates in bacterial outer membrane biogenesis; lipopolysaccharide biosynthesis. The chain is 2-dehydro-3-deoxyphosphooctonate aldolase from Aliivibrio salmonicida (strain LFI1238) (Vibrio salmonicida (strain LFI1238)).